A 143-amino-acid polypeptide reads, in one-letter code: Small ribosomal subunit protein uS12 (143 aa).

Position 62 is a hydroxyproline (proline 62).

This sequence belongs to the universal ribosomal protein uS12 family.

The sequence is that of Small ribosomal subunit protein uS12 (rps23) from Dictyostelium discoideum (Social amoeba).